Here is a 48-residue protein sequence, read N- to C-terminus: Delta-actitoxin-Bcg1b (48 aa).

3 cysteine pairs are disulfide-bonded: cysteine 4-cysteine 45, cysteine 6-cysteine 35, and cysteine 28-cysteine 46.

It belongs to the sea anemone sodium channel inhibitory toxin family. Type I subfamily.

The protein resides in the secreted. The protein localises to the nematocyst. In terms of biological role, binds to the sodium channels Nav1.1/SCN1A (EC(50)=165 nM), Nav1.5/SCN5A (EC(50)=103 nM) and Nav1.6/SCN8A (EC(50)=133 nM), thereby delaying their inactivation. Also inhibits Nav1.2/SCN2A, Nav1.3/SCN3A, and Nav1.4/SCN4A, but to a lesser extent. Inhibits Nav1.5 differently from isoforms Nav1.1 and Nav1.6. In Nav1.5 the effect consists in a right-shift of inactivation; whereas in both Nav1.1 and Nav1.6 the effect consists in an incomplete inactivation. The sequence is that of Delta-actitoxin-Bcg1b from Bunodosoma cangicum (Sea anemone).